The following is a 324-amino-acid chain: Phospho-N-acetylmuramoyl-pentapeptide-transferase (324 aa).

A run of 10 helical transmembrane segments spans residues 9–29 (TFAVAFIITVIGVPLFIPFLV), 53–73 (TMGAVVFITAMLISFLVFSFI), 77–97 (VSAATWLLFIALALFGALGFL), 117–137 (FLGQVVISILFYLVYHFNDFA), 147–167 (IEVDLGWFFVIFILFWLVGFS), 176–196 (LDGLVSGLSVIAFSAFGVIAF), 201–221 (MDVAIFCFAIVGGMLGFLLFN), 227–247 (IFMGDTGSLALGGSIAAISIL), 253–273 (LLLLIGIIFVIETASVILQVF), and 304–324 (VLTFWGIGLVGAIISVCVVIF).

Belongs to the glycosyltransferase 4 family. MraY subfamily. Requires Mg(2+) as cofactor.

It localises to the cell membrane. It carries out the reaction UDP-N-acetyl-alpha-D-muramoyl-L-alanyl-gamma-D-glutamyl-meso-2,6-diaminopimeloyl-D-alanyl-D-alanine + di-trans,octa-cis-undecaprenyl phosphate = di-trans,octa-cis-undecaprenyl diphospho-N-acetyl-alpha-D-muramoyl-L-alanyl-D-glutamyl-meso-2,6-diaminopimeloyl-D-alanyl-D-alanine + UMP. It participates in cell wall biogenesis; peptidoglycan biosynthesis. In terms of biological role, catalyzes the initial step of the lipid cycle reactions in the biosynthesis of the cell wall peptidoglycan: transfers peptidoglycan precursor phospho-MurNAc-pentapeptide from UDP-MurNAc-pentapeptide onto the lipid carrier undecaprenyl phosphate, yielding undecaprenyl-pyrophosphoryl-MurNAc-pentapeptide, known as lipid I. The protein is Phospho-N-acetylmuramoyl-pentapeptide-transferase of Listeria monocytogenes serovar 1/2a (strain ATCC BAA-679 / EGD-e).